The primary structure comprises 323 residues: Dehydrogenase/reductase SDR family member 7B (323 aa).

The Cytoplasmic segment spans residues 1–4 (MDLT). A helical; Signal-anchor for type II membrane protein transmembrane segment spans residues 5 to 25 (SWAIFPLLLASIGVYGLYKLL). Residues 26–272 (QKLRSGAYLQ…AVGERRKELL (247 aa)) are Lumenal-facing. Serine 46 and leucine 48 together coordinate NAD(+). Residue serine 178 participates in substrate binding. 3 residues coordinate NAD(+): tyrosine 191, lysine 195, and threonine 226. Residue tyrosine 191 is the Proton acceptor of the active site.

Belongs to the short-chain dehydrogenases/reductases (SDR) family.

The protein resides in the endoplasmic reticulum membrane. Putative oxidoreductase. The sequence is that of Dehydrogenase/reductase SDR family member 7B (dhrs7b) from Xenopus laevis (African clawed frog).